The sequence spans 164 residues: Peptidyl-prolyl cis-trans isomerase CYP18-2 (164 aa).

The PPIase cyclophilin-type domain maps to 12 to 162; it reads VTLETSMGPF…HEVKILRTKV (151 aa).

This sequence belongs to the cyclophilin-type PPIase family. In terms of tissue distribution, ubiquitous.

The protein localises to the cytoplasm. The catalysed reaction is [protein]-peptidylproline (omega=180) = [protein]-peptidylproline (omega=0). Functionally, PPIases accelerate the folding of proteins. It catalyzes the cis-trans isomerization of proline imidic peptide bonds in oligopeptides. This chain is Peptidyl-prolyl cis-trans isomerase CYP18-2 (CYP18-2), found in Arabidopsis thaliana (Mouse-ear cress).